Consider the following 310-residue polypeptide: Bacteriochlorophyll synthase 34 kDa chain (310 aa).

Over residues 1 to 13 the composition is skewed to polar residues; the sequence is MSDMSDQTRLSSP. Residues 1–20 form a disordered region; that stretch reads MSDMSDQTRLSSPPSLPLHK. 8 helical membrane-spanning segments follow: residues 39-59, 67-87, 112-132, 134-154, 166-186, 187-207, 248-268, and 287-307; these read VTWF…GALG, LLLG…VVND, HVYI…LFLG, QVAF…LRPI, LVAI…FAPL, TGES…IMTV, VIGL…AILL, and VFFN…AAIG.

It is found in the cell membrane. The protein operates within porphyrin-containing compound metabolism; bacteriochlorophyll biosynthesis (light-independent). Catalyzes the esterification of bacteriochlorophyllide a by geranylgeraniol-PPi. This is Bacteriochlorophyll synthase 34 kDa chain (bchG) from Chloroflexus aurantiacus (strain ATCC 29366 / DSM 635 / J-10-fl).